The sequence spans 257 residues: Alkaline phosphatase synthesis transcriptional regulatory protein SphR (257 aa).

The Response regulatory domain maps to 25–148 (RILVVEDEAV…ELVARCRALL (124 aa)). Residue Asp-83 is modified to 4-aspartylphosphate. A DNA-binding region (ompR/PhoB-type) is located at residues 159 to 257 (PAVLRYEGLK…TVRGFGYRLG (99 aa)).

Phosphorylated by SphS.

Member of the two-component regulatory system SphR/SphS. Response regulator. Involved in inducible production of alkaline phosphatase in response to phosphate limitation as it is directly involved in the regulation of phoA transcription in response to phosphate limitation. Binds to two distinct sites upstream from the phoA promoter. The protein is Alkaline phosphatase synthesis transcriptional regulatory protein SphR (sphR) of Synechococcus elongatus (strain ATCC 33912 / PCC 7942 / FACHB-805) (Anacystis nidulans R2).